Here is a 160-residue protein sequence, read N- to C-terminus: Growth arrest and DNA damage-inducible protein GADD45 beta (160 aa).

The protein belongs to the GADD45 family. Interacts with GADD45GIP1.

Involved in the regulation of growth and apoptosis. Mediates activation of stress-responsive MTK1/MEKK4 MAPKKK. In Bos taurus (Bovine), this protein is Growth arrest and DNA damage-inducible protein GADD45 beta (GADD45B).